The primary structure comprises 259 residues: HTH-type transcriptional regulator Rv1719 (259 aa).

The region spanning 13–75 is the HTH iclR-type domain; sequence IQVIARAAEL…GARGPYRLGP (63 aa). Residues 35 to 54 constitute a DNA-binding region (H-T-H motif); the sequence is QAEIGERVGMARSTVSRILN. The IclR-ED domain maps to 88–259; the sequence is VVTEMHPFLT…AWFNGTEDRK (172 aa).

As to quaternary structure, homodimer.

Binds to the upstream region of Rv1714 and probably modulates the expression of the downstream gene(s). In Mycobacterium tuberculosis (strain ATCC 25618 / H37Rv), this protein is HTH-type transcriptional regulator Rv1719.